The following is a 189-amino-acid chain: Ras-like protein 1 (189 aa).

10–17 (GAGGVGKS) contributes to the GTP binding site. Residues 32–40 (YDPTIEDSY) carry the Effector region motif. Residues 57 to 61 (DTAGQ) and 116 to 119 (NKCD) each bind GTP. Position 186 is a cysteine methyl ester (C186). C186 is lipidated: S-geranylgeranyl cysteine. Positions 187–189 (KML) are cleaved as a propeptide — removed in mature form.

Belongs to the small GTPase superfamily. Ras family.

The protein resides in the cell membrane. The enzyme catalyses GTP + H2O = GDP + phosphate + H(+). Its activity is regulated as follows. Alternates between an inactive form bound to GDP and an active form bound to GTP. Activated by a guanine nucleotide-exchange factor (GEF) and inactivated by a GTPase-activating protein (GAP). Functionally, ras proteins bind GDP/GTP and possess intrinsic GTPase activity. Plays a role in eye development by regulating cell growth, survival of postmitotic ommatidial cells and differentiation of photoreceptor cells. During larval development, mediates Ptth/tor signaling leading to the production of ecdysone, a hormone required for the initiation of metamorphosis. The sequence is that of Ras-like protein 1 from Drosophila grimshawi (Hawaiian fruit fly).